The primary structure comprises 1841 residues: Sucrase-isomaltase, intestinal (1841 aa).

The Cytoplasmic portion of the chain corresponds to 1–12 (MAKKKFSALEIS). Position 7 is a phosphoserine; by PKA (Ser7). The helical; Signal-anchor for type II membrane protein transmembrane segment at 13–32 (LIVLFIIVTAIAIALVTVLA) threads the bilayer. At 33–1841 (TKVPAVEEIK…LDEPIQITWS (1809 aa)) the chain is on the lumenal side. A disordered region spans residues 42-81 (KSPTPTSNSTPTSTPTSTSTPTSTSTPSPGKCPPEQGEPI). The segment covering 43-70 (SPTPTSNSTPTSTPTSTSTPTSTSTPSP) has biased composition (low complexity). In terms of domain architecture, P-type 1 spans 71 to 120 (GKCPPEQGEPINERINCIPEQHPTKAICEERGCCWRPWNNTVIPWCFFAD). 3 cysteine pairs are disulfide-bonded: Cys73-Cys104, Cys87-Cys103, and Cys98-Cys116. N-linked (GlcNAc...) asparagine glycosylation occurs at Asn109. Positions 120-1013 (DNHGYNAESI…ELQLNPPNAR (894 aa)) are isomaltase. Substrate is bound by residues Asp274 and Asp398. Residues Tyr401 and Tyr410 each carry the sulfotyrosine modification. Asn464 carries N-linked (GlcNAc...) asparagine glycosylation. The active-site Nucleophile; for isomaltase activity is Asp514. Arg599 lines the substrate pocket. Asp615 serves as the catalytic For isomaltase activity. An intrachain disulfide couples Cys646 to Cys657. Position 673 (His673) interacts with substrate. 4 N-linked (GlcNAc...) asparagine glycosylation sites follow: Asn758, Asn765, Asn867, and Asn910. Residues 936-984 (RWCRTFSDNEKFTCYPDVGTATEGTCTQRGCLWQPVSGLSNVPPYYFPP) form the P-type 2 domain. The interval 1014–1841 (IKLPSNPIST…LDEPIQITWS (828 aa)) is sucrase. N-linked (GlcNAc...) asparagine glycosylation is found at Asn1240, Asn1308, Asn1345, Asn1359, and Asn1373. Tyr1387 is modified (sulfotyrosine). Catalysis depends on Asp1399, which acts as the Nucleophile; for sucrase activity. Catalysis depends on Glu1402, which acts as the For sucrase activity. N-linked (GlcNAc...) asparagine glycosylation is present at Asn1485. Asp1512 (proton donor; for sucrase activity) is an active-site residue. 4 N-linked (GlcNAc...) asparagine glycosylation sites follow: Asn1513, Asn1575, Asn1762, and Asn1829.

The protein belongs to the glycosyl hydrolase 31 family. In terms of assembly, the resulting sucrase and isomaltase subunits stay associated with one another in a complex by non-covalent linkages. Post-translationally, the precursor is proteolytically cleaved when exposed to pancreatic proteases in the intestinal lumen. Sulfated.

The protein resides in the apical cell membrane. It catalyses the reaction Hydrolysis of sucrose and maltose by an alpha-D-glucosidase-type action.. The catalysed reaction is Hydrolysis of (1-&gt;6)-alpha-D-glucosidic linkages in some oligosaccharides produced from starch and glycogen by alpha-amylase, and in isomaltose.. Its function is as follows. Plays an important role in the final stage of carbohydrate digestion. Isomaltase activity is specific for both alpha-1,4- and alpha-1,6-oligosaccharides. This chain is Sucrase-isomaltase, intestinal (Si), found in Rattus norvegicus (Rat).